Reading from the N-terminus, the 475-residue chain is Transmembrane protein 181 (475 aa).

9 helical membrane-spanning segments follow: residues 16-36 (HFVL…FVGI), 131-151 (EIIV…IVGF), 175-195 (LEIW…CLFA), 214-234 (SVLL…SFLV), 245-265 (LFQS…YHGI), 276-296 (FYLP…TLGI), 320-340 (MKVF…FLIV), 356-376 (LKFL…ILYL), and 401-421 (FLSF…VYSP). Residue S443 is modified to Phosphoserine.

The protein belongs to the TMEM181 family. In terms of assembly, interacts with cytolethal distending toxin.

Its subcellular location is the membrane. Mediates action of cytolethal distending toxins (CDT), which are secreted by many pathogenic bacteria. Expression level of TMEM181 is rate-limiting for intoxication. The polypeptide is Transmembrane protein 181 (TMEM181) (Homo sapiens (Human)).